Reading from the N-terminus, the 396-residue chain is Acetate kinase (396 aa).

Asn-6 contacts Mg(2+). Residue Lys-13 coordinates ATP. Arg-89 lines the substrate pocket. Residue Asp-145 is the Proton donor/acceptor of the active site. ATP contacts are provided by residues 205–209 (HLGNG), 280–282 (DMR), and 329–333 (GVGEN). Residue Glu-383 coordinates Mg(2+).

This sequence belongs to the acetokinase family. As to quaternary structure, homodimer. It depends on Mg(2+) as a cofactor. Requires Mn(2+) as cofactor.

The protein localises to the cytoplasm. The enzyme catalyses acetate + ATP = acetyl phosphate + ADP. Its pathway is metabolic intermediate biosynthesis; acetyl-CoA biosynthesis; acetyl-CoA from acetate: step 1/2. In terms of biological role, catalyzes the formation of acetyl phosphate from acetate and ATP. Can also catalyze the reverse reaction. This chain is Acetate kinase, found in Mesoplasma florum (strain ATCC 33453 / NBRC 100688 / NCTC 11704 / L1) (Acholeplasma florum).